We begin with the raw amino-acid sequence, 165 residues long: uncharacterized protein (165 aa).

The segment at 1–36 is disordered; the sequence is MTRLCLPRPEAREDPIPVPPRGLGAGEGSGSPVRPP. The chain crosses the membrane as a helical span at residues 135–155; it reads LLLLMGLGPLLRACGMPLTLL.

It is found in the membrane. This is an uncharacterized protein from Homo sapiens (Human).